The following is a 72-amino-acid chain: Lantibiotic lichenicidin VK21 A2 (72 aa).

The tract at residues 1–21 (MKTMKNSAAREAFKGANHPAG) is disordered. A propeptide spanning residues 1-40 (MKTMKNSAAREAFKGANHPAGMVSEEELKALVGGNDVNPE) is cleaved from the precursor. A 2-oxobutanoic acid modification is found at T41. (Z)-2,3-didehydrobutyrine occurs at positions 42, 45, and 46. Residues 47–51 (SSWTC) constitute a cross-link (lanthionine (Ser-Cys)). Position 48 is a 2,3-didehydroalanine (Ser) (S48). (Z)-2,3-didehydrobutyrine is present on residues T53 and T57. Residues 59-63 (SASLC) constitute a cross-link (lanthionine (Ser-Cys)). 2 cross-links (beta-methyllanthionine (Thr-Cys)) span residues 65–68 (TTKC) and 69–72 (TSRC). The residue at position 66 (T66) is a (Z)-2,3-didehydrobutyrine.

Maturation of lantibiotics involves the enzymatic conversion of Thr, and Ser into dehydrated AA and the formation of thioether bonds with cysteine. This is followed by membrane translocation and cleavage of the modified precursor. In terms of processing, the 2,3-didehydrobutyrines are determined to be the Z-isomers.

The protein localises to the secreted. Functionally, lanthionine-containing peptide antibiotic (lantibiotic) active on Gram-positive bacteria. The bactericidal activity of lantibiotics is based on depolarization of energized bacterial cytoplasmic membranes, initiated by the formation of aqueous transmembrane pores. When present individually, LchA2 exhibits activity towards B.subtilis L1 (IC(50)=30 uM), Rhodococcus sp. SS2 (IC(50)=16.6 uM), M.luteus B1314 (IC(50)=2.6 uM), B.megaterium VKM41 (IC(50)=2 uM), S.aureus 209p (IC(50)=20 uM), B.pumilus 2001, B.globigii I, B.amyloliquefaciens I, M.smegmatis 1171 and M.phlei 1291. However, when combined with LchA1, it displays much stronger activity against B.subtilis L1 (IC(50)=0.64 uM), Rhodococcus sp. SS2 (IC(50)=0.64 uM), M.luteus B1314 (IC(50)=0.09 uM), B.megaterium VKM41 (IC(50)=0.12 uM) and S.aureus 209p (IC(50)=0.64 uM). The activity of the combined LchA1 and LchA2 peptides is strongest at a molar ratio of 1. Even when applied at 17-fold concentration of the highest IC(50) values for Gram-positive bacteria, neither the individual nor the combined peptides display activity against Gram-negative bacteria P.aeruginosa PAO1, P.putida I-97 or E.coli C600. In Bacillus licheniformis, this protein is Lantibiotic lichenicidin VK21 A2.